The sequence spans 332 residues: Anthranilate phosphoribosyltransferase (332 aa).

Residues glycine 79, 82-83, serine 87, 89-92, 107-115, and serine 119 each bind 5-phospho-alpha-D-ribose 1-diphosphate; these read GD, NIST, and KHGNRSVSS. Residue glycine 79 coordinates anthranilate. Position 91 (serine 91) interacts with Mg(2+). Residue asparagine 110 coordinates anthranilate. Position 165 (arginine 165) interacts with anthranilate. Residues aspartate 223 and glutamate 224 each contribute to the Mg(2+) site.

The protein belongs to the anthranilate phosphoribosyltransferase family. In terms of assembly, homodimer. Requires Mg(2+) as cofactor.

The enzyme catalyses N-(5-phospho-beta-D-ribosyl)anthranilate + diphosphate = 5-phospho-alpha-D-ribose 1-diphosphate + anthranilate. It participates in amino-acid biosynthesis; L-tryptophan biosynthesis; L-tryptophan from chorismate: step 2/5. Catalyzes the transfer of the phosphoribosyl group of 5-phosphorylribose-1-pyrophosphate (PRPP) to anthranilate to yield N-(5'-phosphoribosyl)-anthranilate (PRA). In Sodalis glossinidius (strain morsitans), this protein is Anthranilate phosphoribosyltransferase.